Consider the following 394-residue polypeptide: NADH dehydrogenase [ubiquinone] iron-sulfur protein 2 (394 aa).

Polar residues predominate over residues Met-1–Gly-16. The disordered stretch occupies residues Met-1 to Ala-22.

Belongs to the complex I 49 kDa subunit family. Complex I is composed of about 45 different subunits. This is a component of the iron-sulfur (IP) fragment of the enzyme.

The protein localises to the mitochondrion. The catalysed reaction is a ubiquinone + NADH + 5 H(+)(in) = a ubiquinol + NAD(+) + 4 H(+)(out). Functionally, core subunit of the mitochondrial membrane respiratory chain NADH dehydrogenase (Complex I) that is believed to belong to the minimal assembly required for catalysis. Complex I functions in the transfer of electrons from NADH to the respiratory chain. The immediate electron acceptor for the enzyme is believed to be ubiquinone. Component of the iron-sulfur (IP) fragment of the enzyme. The chain is NADH dehydrogenase [ubiquinone] iron-sulfur protein 2 (NAD7) from Nicotiana sylvestris (Wood tobacco).